The following is a 93-amino-acid chain: Aspartyl/glutamyl-tRNA(Asn/Gln) amidotransferase subunit C (93 aa).

It belongs to the GatC family. In terms of assembly, heterotrimer of A, B and C subunits.

The catalysed reaction is L-glutamyl-tRNA(Gln) + L-glutamine + ATP + H2O = L-glutaminyl-tRNA(Gln) + L-glutamate + ADP + phosphate + H(+). The enzyme catalyses L-aspartyl-tRNA(Asn) + L-glutamine + ATP + H2O = L-asparaginyl-tRNA(Asn) + L-glutamate + ADP + phosphate + 2 H(+). Allows the formation of correctly charged Asn-tRNA(Asn) or Gln-tRNA(Gln) through the transamidation of misacylated Asp-tRNA(Asn) or Glu-tRNA(Gln) in organisms which lack either or both of asparaginyl-tRNA or glutaminyl-tRNA synthetases. The reaction takes place in the presence of glutamine and ATP through an activated phospho-Asp-tRNA(Asn) or phospho-Glu-tRNA(Gln). The chain is Aspartyl/glutamyl-tRNA(Asn/Gln) amidotransferase subunit C from Methanococcoides burtonii (strain DSM 6242 / NBRC 107633 / OCM 468 / ACE-M).